A 104-amino-acid chain; its full sequence is Ig lambda-2 chain C region (104 aa).

The Ig-like domain occupies 6-99 (PTLTVFPPSS…EGDTVEKSLS (94 aa)). A disulfide bond links cysteine 27 and cysteine 85.

In Mus musculus (Mouse), this protein is Ig lambda-2 chain C region (Iglc2).